Consider the following 550-residue polypeptide: Endonuclease/exonuclease/phosphatase family domain-containing protein 1 (550 aa).

The region spanning 39–68 (ERLNINTATEEELMTLPGVNRGVAQNIVEY) is the HhH domain. Positions 194–213 (STNTNGGFTHPSPTSFSVQS) are enriched in polar residues. Residues 194–216 (STNTNGGFTHPSPTSFSVQSDEP) are disordered.

This is Endonuclease/exonuclease/phosphatase family domain-containing protein 1 (eepd1) from Danio rerio (Zebrafish).